A 310-amino-acid polypeptide reads, in one-letter code: Glutaminase 1 (310 aa).

Substrate contacts are provided by serine 66, asparagine 117, glutamate 161, asparagine 168, tyrosine 192, tyrosine 244, and valine 262. Lysine 294 carries the N6-acetyllysine modification.

Belongs to the glutaminase family. Homotetramer.

The catalysed reaction is L-glutamine + H2O = L-glutamate + NH4(+). This Escherichia coli O6:H1 (strain CFT073 / ATCC 700928 / UPEC) protein is Glutaminase 1.